The primary structure comprises 379 residues: Type II methyltransferase M.SsoII (379 aa).

The region spanning 9–66 is the HTH cro/C1-type domain; sequence IKEKRERLHMTQKEFADALGLSKYGDRTIRRWERGETKPTGAELKAVIDFPDTPPYPN. An SAM-dependent MTase C5-type domain is found at 72–379; sequence YRMIDLFAGI…AEKIISTLDS (308 aa). Residue Cys-142 is part of the active site.

It belongs to the class I-like SAM-binding methyltransferase superfamily. C5-methyltransferase family.

The catalysed reaction is a 2'-deoxycytidine in DNA + S-adenosyl-L-methionine = a 5-methyl-2'-deoxycytidine in DNA + S-adenosyl-L-homocysteine + H(+). A methylase that recognizes the double-stranded sequence 5'-CCNGG-3', methylates C-2 on both strands, and protects the DNA from cleavage by the SsoII endonuclease. The sequence is that of Type II methyltransferase M.SsoII (ssoIIM) from Shigella sonnei.